The chain runs to 345 residues: UPF0324 membrane protein RB0971 (345 aa).

10 helical membrane-spanning segments follow: residues 13–32 (SLSV…AAVA), 42–61 (YGAP…HFLA), 93–115 (LLIG…TILF), 130–152 (ALLT…AAVL), 161–183 (NLIF…YPIV), 193–215 (ATGI…GFSV), 228–247 (LIRV…VLRS), 262–284 (VPGF…VPVL), 291–310 (AISR…KTSL), and 320–342 (AVAL…MYYL).

Belongs to the UPF0324 family.

It is found in the cell membrane. The chain is UPF0324 membrane protein RB0971 from Rhizobium meliloti (strain 1021) (Ensifer meliloti).